Consider the following 366-residue polypeptide: Mannonate dehydratase (366 aa).

This sequence belongs to the mannonate dehydratase family. It depends on Fe(2+) as a cofactor. Requires Mn(2+) as cofactor.

The enzyme catalyses D-mannonate = 2-dehydro-3-deoxy-D-gluconate + H2O. It functions in the pathway carbohydrate metabolism; pentose and glucuronate interconversion. Functionally, catalyzes the dehydration of D-mannonate. The protein is Mannonate dehydratase of Streptococcus pneumoniae (strain 70585).